Consider the following 617-residue polypeptide: Protein kinase STUNTED (617 aa).

Residues 162-187 (SSELSEGFSDKDLAKTTGQEKRKISG) are disordered. The span at 169–184 (FSDKDLAKTTGQEKRK) shows a compositional bias: basic and acidic residues. Positions 277 to 555 (FSLENLIGKG…RGEDDVSKWV (279 aa)) constitute a Protein kinase domain. ATP is bound by residues 283 to 291 (IGKGGCNEV) and K305. Y350 is modified (phosphotyrosine). D399 functions as the Proton acceptor in the catalytic mechanism. S403 carries the post-translational modification Phosphoserine. T439 is subject to Phosphothreonine. Position 447 is a phosphotyrosine (Y447). A disordered region spans residues 590 to 617 (DSVSNSSLERSNNSLFSSSSSSSQELQS). The segment covering 591–617 (SVSNSSLERSNNSLFSSSSSSSQELQS) has biased composition (low complexity).

The protein belongs to the protein kinase superfamily. Ser/Thr protein kinase family. As to expression, expressed ubiquitously, mostly in roots, to a lower extent in leaves, floral buds and stems, and, at low levels, in flowers and siliques.

It is found in the cytoplasm. Promotes cell proliferation in the gibberellic acid (GA) signaling pathway, acting downstream of RGA, and possibly through a negative regulation of two cyclin-dependent kinase inhibitors SIM and SMR1. This is Protein kinase STUNTED from Arabidopsis thaliana (Mouse-ear cress).